A 738-amino-acid chain; its full sequence is Flowering time control protein FCA (738 aa).

The segment at 1-118 is disordered; that stretch reads MHRGGDRSTD…RGDHSDHDNR (118 aa). Composition is skewed to gly residues over residues 52–70 and 81–98; these read RGGG…GGGR and SGGG…GEPG. Over residues 109–118 the composition is skewed to basic and acidic residues; that stretch reads RGDHSDHDNR. 2 RRM domains span residues 122–203 and 213–293; these read VKLF…YADG and HKLF…FADP. 2 disordered regions span residues 292-451 and 566-595; these read DPKR…PAQQ and QQSN…IIPS. Residues 301-311 are compositionally biased toward gly residues; the sequence is SRGGPAFGGPG. Residues 342–358 show a composition bias toward polar residues; the sequence is HPSSPRSAPHQFNNFGS. Residues 368–377 show a composition bias toward low complexity; that stretch reads TVTSTTDTAT. A compositionally biased stretch (polar residues) spans 383 to 401; sequence FSGNGSLSSQTAVPSSSHM. Residues 435–451 are compositionally biased toward low complexity; it reads QLQNNQQGQPLQGPAQQ. The segment covering 575–595 has biased composition (polar residues); it reads PTQGQPVQSSNPGAPNAIIPS. Positions 609–642 constitute a WW domain; sequence VPLTCNWTEHTSPEGFKYYYNSITRESKWDKPEE. Residues 670-738 are disordered; it reads MQQLQSPPQA…QSAQERAWKS (69 aa). The span at 683-706 shows a compositional bias: low complexity; that stretch reads PAMQPVQQIPQAQQGQQQMQMKQQ. Residues 723 to 732 are compositionally biased toward polar residues; the sequence is RIQQGIQSAQ.

As to quaternary structure, interacts with FY. Binds to SF1, FIK, RPRD1B, OsI_31983 and MADS8.

The protein localises to the nucleus. In terms of biological role, plays a major role in the promotion of the transition of the vegetative meristem to reproductive development. Required for RNA-mediated chromatin silencing of a range of loci in the genome. Cotranscriptionally recognizes aberrant RNA and marks it for silencing. Controls alternative cleavage and polyadenylation on pre-mRNAs and antisense RNAs. Regulates flowering time, seed size and cell volume, probably via the modulation of cell size. This chain is Flowering time control protein FCA, found in Oryza sativa subsp. indica (Rice).